The following is a 197-amino-acid chain: HTH-type transcriptional regulator BetI (197 aa).

In terms of domain architecture, HTH tetR-type spans 8–68; the sequence is PIRRQQLIEA…ATMRYLMSVL (61 aa). A DNA-binding region (H-T-H motif) is located at residues 31 to 50; sequence SIALIARLAGVSNGIISHYF.

Its pathway is amine and polyamine biosynthesis; betaine biosynthesis via choline pathway [regulation]. Its function is as follows. Repressor involved in the biosynthesis of the osmoprotectant glycine betaine. It represses transcription of the choline transporter BetT and the genes of BetAB involved in the synthesis of glycine betaine. The polypeptide is HTH-type transcriptional regulator BetI (Pseudomonas fluorescens (strain Pf0-1)).